The following is a 101-amino-acid chain: Small ribosomal subunit protein uS14 (101 aa).

This sequence belongs to the universal ribosomal protein uS14 family. Part of the 30S ribosomal subunit. Contacts proteins S3 and S10.

Binds 16S rRNA, required for the assembly of 30S particles and may also be responsible for determining the conformation of the 16S rRNA at the A site. The polypeptide is Small ribosomal subunit protein uS14 (Leptothrix cholodnii (strain ATCC 51168 / LMG 8142 / SP-6) (Leptothrix discophora (strain SP-6))).